The primary structure comprises 549 residues: Glucose-6-phosphate isomerase (549 aa).

The Proton donor role is filled by E355. Residues H387 and K515 contribute to the active site.

The protein belongs to the GPI family.

It localises to the cytoplasm. It catalyses the reaction alpha-D-glucose 6-phosphate = beta-D-fructose 6-phosphate. The protein operates within carbohydrate biosynthesis; gluconeogenesis. It functions in the pathway carbohydrate degradation; glycolysis; D-glyceraldehyde 3-phosphate and glycerone phosphate from D-glucose: step 2/4. Its function is as follows. Catalyzes the reversible isomerization of glucose-6-phosphate to fructose-6-phosphate. The protein is Glucose-6-phosphate isomerase of Haemophilus influenzae (strain PittEE).